Consider the following 201-residue polypeptide: 3-isopropylmalate dehydratase small subunit (201 aa).

The protein belongs to the LeuD family. LeuD type 1 subfamily. As to quaternary structure, heterodimer of LeuC and LeuD.

It carries out the reaction (2R,3S)-3-isopropylmalate = (2S)-2-isopropylmalate. Its pathway is amino-acid biosynthesis; L-leucine biosynthesis; L-leucine from 3-methyl-2-oxobutanoate: step 2/4. Catalyzes the isomerization between 2-isopropylmalate and 3-isopropylmalate, via the formation of 2-isopropylmaleate. The chain is 3-isopropylmalate dehydratase small subunit from Shewanella putrefaciens (strain CN-32 / ATCC BAA-453).